The primary structure comprises 431 residues: Serine hydroxymethyltransferase 1 (431 aa).

(6S)-5,6,7,8-tetrahydrofolate-binding positions include Leu-127 and 131–133; that span reads GHL. N6-(pyridoxal phosphate)lysine is present on Lys-236. Position 252 (Glu-252) interacts with (6S)-5,6,7,8-tetrahydrofolate.

It belongs to the SHMT family. Homodimer. It depends on pyridoxal 5'-phosphate as a cofactor.

The protein resides in the cytoplasm. The enzyme catalyses (6R)-5,10-methylene-5,6,7,8-tetrahydrofolate + glycine + H2O = (6S)-5,6,7,8-tetrahydrofolate + L-serine. It functions in the pathway one-carbon metabolism; tetrahydrofolate interconversion. The protein operates within amino-acid biosynthesis; glycine biosynthesis; glycine from L-serine: step 1/1. Catalyzes the reversible interconversion of serine and glycine with tetrahydrofolate (THF) serving as the one-carbon carrier. This reaction serves as the major source of one-carbon groups required for the biosynthesis of purines, thymidylate, methionine, and other important biomolecules. Also exhibits THF-independent aldolase activity toward beta-hydroxyamino acids, producing glycine and aldehydes, via a retro-aldol mechanism. The chain is Serine hydroxymethyltransferase 1 from Rhizobium meliloti (strain 1021) (Ensifer meliloti).